A 988-amino-acid polypeptide reads, in one-letter code: MEQSRSQQRGGEQSWWGSDPQYQYMPFEHCTSYGLPSENGGLQHRLRKDAGPRHNVHPTQIYGHHKEQFSDREQDIGMPKKTGSSSTVDSKDEDHYSKCQDCIHRLGQVVRRKLGEDGIFLVLLGLLMALVSWSMDYVSAKSLQAYKWSYAQMQPSLPLQFLVWVTFPLVLILFSALFCHLISPQAVGSGIPEMKTILRGVVLKEYLTMKAFVAKVVALTAGLGSGIPVGKEGPFVHIASICAAVLSKFMSVFCGVYEQPYYYSDILTVGCAVGVGCCFGTPLGGVLFSIEVTSTYFAVRNYWRGFFAATFSAFVFRVLAVWNKDAVTITALFRTNFRMDFPFDLKELPAFAAIGICCGLLGAVFVYLHRQVMLGVRKHKALSQFLAKHRLLYPGIVTFVIASFTFPPGMGQFMAGELMPREAISTLFDNNTWVKHAGDPESLGQSAVWIHPRVNVVIIIFLFFVMKFWMSIVATTMPIPCGGFMPVFVLGAAFGRLVGEIMAMLFPDGILFDDIIYKILPGGYAVIGAAALTGAVSHTVSTAVICFELTGQIAHILPMMVAVILANMVAQSLQPSLYDSIIQVKKLPYLPDLGWNQLSKYTIFVEDIMVRDVKFVSASYTYGELRTLLQTTTVKTLPLVDSKDSMILLGSVERSELQALLQRHLCPERRLRAAQEMARKLSELPYDGKARLAGEGLPGAPPGRPESFAFVDEDEDEDLSGKSELPPSLALHPSTTAPLSPEEPNGPLPGHKQQPEAPEPAGQRPSIFQSLLHCLLGRARPTKKKTTQDSTDLVDNMSPEEIEAWEQEQLSQPVCFDSCCIDQSPFQLVEQTTLHKTHTLFSLLGLHLAYVTSMGKLRGVLALEELQKAIEGHTKSGVQLRPPLASFRNTTSTRKSTGAPPSSAENWNLPEDRPGATGTGDVIAASPETPVPSPSPEPPLSLAPGKVEGELEELELVESPGLEEELADILQGPSLRSTDEEDEDELIL.

The Cytoplasmic segment spans residues 1–118; it reads MEQSRSQQRG…VVRRKLGEDG (118 aa). The segment covering 65 to 75 has biased composition (basic and acidic residues); that stretch reads HKEQFSDREQD. The segment at 65–92 is disordered; sequence HKEQFSDREQDIGMPKKTGSSSTVDSKD. Residues 119-150 traverse the membrane as a helical segment; sequence IFLVLLGLLMALVSWSMDYVSAKSLQAYKWSY. Residues 151-158 are Extracellular-facing; that stretch reads AQMQPSLP. The helical transmembrane segment at 159-179 threads the bilayer; the sequence is LQFLVWVTFPLVLILFSALFC. Residues 180–183 lie on the Cytoplasmic side of the membrane; that stretch reads HLIS. Residues 184-189 constitute an intramembrane region (note=Loop between two helices); sequence PQAVGS. A Selectivity filter part_1 motif is present at residues 188 to 192; the sequence is GSGIP. Residue serine 189 participates in chloride binding. Residues 190–195 constitute an intramembrane region (helical); sequence GIPEMK. At 196-208 the chain is on the cytoplasmic side; it reads TILRGVVLKEYLT. The segment at residues 209–224 is an intramembrane region (helical); the sequence is MKAFVAKVVALTAGLG. The segment at residues 225–230 is an intramembrane region (note=Loop between two helices); the sequence is SGIPVG. The Selectivity filter part_2 signature appears at 230–234; sequence GKEGP. The helical intramembrane region spans 231–246; the sequence is KEGPFVHIASICAAVL. Topologically, residues 247–268 are cytoplasmic; the sequence is SKFMSVFCGVYEQPYYYSDILT. Intramembrane regions (helical) lie at residues 269 to 280 and 281 to 290; these read VGCAVGVGCCFG and TPLGGVLFSI. The Cytoplasmic segment spans residues 291–301; sequence EVTSTYFAVRN. The helical transmembrane segment at 302-321 threads the bilayer; it reads YWRGFFAATFSAFVFRVLAV. The Extracellular segment spans residues 322-347; it reads WNKDAVTITALFRTNFRMDFPFDLKE. Residues 348–376 form a helical membrane-spanning segment; that stretch reads LPAFAAIGICCGLLGAVFVYLHRQVMLGV. At 377–390 the chain is on the cytoplasmic side; that stretch reads RKHKALSQFLAKHR. The chain crosses the membrane as a helical span at residues 391 to 408; that stretch reads LLYPGIVTFVIASFTFPP. Topologically, residues 409 to 414 are extracellular; it reads GMGQFM. Positions 415 to 418 form an intramembrane region, note=Loop between two helices; it reads AGEL. Residues 419-426 constitute an intramembrane region (helical); that stretch reads MPREAIST. The Extracellular portion of the chain corresponds to 427 to 457; sequence LFDNNTWVKHAGDPESLGQSAVWIHPRVNVV. Residues 458 to 475 constitute an intramembrane region (helical); that stretch reads IIIFLFFVMKFWMSIVAT. The segment at residues 476–482 is an intramembrane region (note=Loop between two helices); sequence TMPIPCG. Residues 482-486 carry the Selectivity filter part_3 motif; that stretch reads GGFMP. Residues 483–498 constitute an intramembrane region (helical); it reads GFMPVFVLGAAFGRLV. Residue phenylalanine 484 participates in chloride binding. Topologically, residues 499 to 521 are extracellular; the sequence is GEIMAMLFPDGILFDDIIYKILP. The segment at residues 522–538 is an intramembrane region (helical); the sequence is GGYAVIGAAALTGAVSH. Positions 539-540 form an intramembrane region, note=Loop between two helices; it reads TV. An intramembrane region (helical) is located at residues 541–554; that stretch reads STAVICFELTGQIA. Residues 555–557 are Extracellular-facing; that stretch reads HIL. The helical intramembrane region spans 558-571; it reads PMMVAVILANMVAQ. The note=Loop between two helices intramembrane region spans 572 to 575; sequence SLQP. An intramembrane region (helical) is located at residues 576–578; the sequence is SLY. A chloride-binding site is contributed by tyrosine 578. Over 579-988 the chain is Cytoplasmic; sequence DSIIQVKKLP…DEEDEDELIL (410 aa). The CBS 1 domain occupies 609 to 668; it reads MVRDVKFVSASYTYGELRTLLQTTTVKTLPLVDSKDSMILLGSVERSELQALLQRHLCPE. The disordered stretch occupies residues 713-764; sequence EDEDEDLSGKSELPPSLALHPSTTAPLSPEEPNGPLPGHKQQPEAPEPAGQR. Positions 821–876 constitute a CBS 2 domain; sequence IDQSPFQLVEQTTLHKTHTLFSLLGLHLAYVTSMGKLRGVLALEELQKAIEGHTKS. A disordered region spans residues 880–988; the sequence is LRPPLASFRN…DEEDEDELIL (109 aa). Serine 886 carries the post-translational modification Phosphoserine. Residues 887–906 show a composition bias toward polar residues; the sequence is FRNTTSTRKSTGAPPSSAEN. The span at 929 to 941 shows a compositional bias: pro residues; it reads TPVPSPSPEPPLS. 2 stretches are compositionally biased toward acidic residues: residues 950–967 and 979–988; these read ELEE…EELA and DEEDEDELIL.

The protein belongs to the chloride channel (TC 2.A.49) family. ClC-1/CLCN1 subfamily. As to quaternary structure, homodimer. In terms of tissue distribution, predominantly expressed in skeletal muscles.

The protein localises to the cell membrane. The protein resides in the sarcolemma. Its subcellular location is the T-tubule. It carries out the reaction chloride(in) = chloride(out). The catalysed reaction is thiocyanate(in) = thiocyanate(out). The enzyme catalyses bromide(in) = bromide(out). It catalyses the reaction nitrate(in) = nitrate(out). It carries out the reaction iodide(out) = iodide(in). Its activity is regulated as follows. Modulated by membrane voltage with depolarization favouring channel opening and hyperpolarization favouring channel closure. Inhibited by acidic pH and ATP binding due to a shift of voltage dependence of common gating to more positive voltages. Inhibited by 9-anthracene-carboxylic. Its function is as follows. Voltage-gated chloride channel involved in skeletal muscle excitability. Generates most of the plasma membrane chloride conductance in skeletal muscle fibers, stabilizes the resting membrane potential and contributes to the repolarization phase during action potential firing. Forms a homodimeric channel where each subunit has its own ion conduction pathway. Conducts double-barreled currents controlled by two types of gates, two fast glutamate gates that control each subunit independently and a slow common gate that opens and shuts off both subunits simultaneously. Has a significant open probability at muscle resting potential and is further activated upon membrane depolarization. Permeable to small monovalent anions with ion selectivity for chloride &gt; thiocyanate &gt; bromide &gt; nitrate &gt; iodide. This chain is Chloride channel protein 1, found in Homo sapiens (Human).